A 684-amino-acid polypeptide reads, in one-letter code: Poly(A) RNA polymerase cid14 (684 aa).

Disordered regions lie at residues Met-1–Asp-52, Asp-64–Glu-127, and Trp-161–Glu-219. 5 stretches are compositionally biased toward basic and acidic residues: residues Glu-19–Ser-35, Gly-73–Gly-91, Asp-108–Glu-127, Ser-171–Lys-186, and Phe-199–Asn-210. Asp-298 and Asp-300 together coordinate Mg(2+). Gly-364, Lys-389, Ser-407, Tyr-408, Asn-492, and Lys-496 together coordinate ATP. Residues Asn-434–Asn-492 enclose the PAP-associated domain. Residues Gly-623–Phe-684 form a disordered region. Positions Gln-628 to Ser-655 are enriched in polar residues. Residues Asp-656 to Asp-672 are compositionally biased toward acidic residues.

This sequence belongs to the DNA polymerase type-B-like family. In terms of assembly, heterooligomer. Component of the TRAMP complex composed of at least cid14, mtr4, and air1. Mg(2+) is required as a cofactor. Requires Mn(2+) as cofactor.

Its subcellular location is the nucleus. The protein resides in the nucleolus. The enzyme catalyses RNA(n) + ATP = RNA(n)-3'-adenine ribonucleotide + diphosphate. Functionally, required for 3' polyadenylation of the 5.8S and 25S rRNAs as a prelude to their degradation in the exosome. Involved in the nucleolar organization to ensure faithful chromosome segregation during mitosis. The chain is Poly(A) RNA polymerase cid14 (cid14) from Schizosaccharomyces pombe (strain 972 / ATCC 24843) (Fission yeast).